A 189-amino-acid polypeptide reads, in one-letter code: Transcription factor FapR (189 aa).

This sequence belongs to the FapR family.

In terms of biological role, transcriptional factor involved in regulation of membrane lipid biosynthesis by repressing genes involved in fatty acid and phospholipid metabolism. In Exiguobacterium sp. (strain ATCC BAA-1283 / AT1b), this protein is Transcription factor FapR.